A 139-amino-acid chain; its full sequence is Coat protein TP2 (139 aa).

It localises to the virion. In Thermoproteus tenax virus 1 (strain KRA1) (TTV1), this protein is Coat protein TP2.